The primary structure comprises 309 residues: Peptide methionine sulfoxide reductase MsrA/MsrB (309 aa).

A peptide methionine sulfoxide reductase A region spans residues 1–153 (MIYLAEGCFW…PNGYCHIDIN (153 aa)). Cys8 is a catalytic residue. Residues 170-293 (ATEIKAKLSA…NSLSITFIPK (124 aa)) form the MsrB domain. The active-site Nucleophile is the Cys282.

In the N-terminal section; belongs to the MsrA Met sulfoxide reductase family. The protein in the C-terminal section; belongs to the MsrB Met sulfoxide reductase family.

It catalyses the reaction L-methionyl-[protein] + [thioredoxin]-disulfide + H2O = L-methionyl-(S)-S-oxide-[protein] + [thioredoxin]-dithiol. The enzyme catalyses [thioredoxin]-disulfide + L-methionine + H2O = L-methionine (S)-S-oxide + [thioredoxin]-dithiol. The catalysed reaction is L-methionyl-[protein] + [thioredoxin]-disulfide + H2O = L-methionyl-(R)-S-oxide-[protein] + [thioredoxin]-dithiol. In terms of biological role, has an important function as a repair enzyme for proteins that have been inactivated by oxidation. Catalyzes the reversible oxidation-reduction of methionine sulfoxide in proteins to methionine. This Streptococcus pyogenes serotype M3 (strain ATCC BAA-595 / MGAS315) protein is Peptide methionine sulfoxide reductase MsrA/MsrB (msrAB).